The chain runs to 256 residues: Pimeloyl-[acyl-carrier protein] methyl ester esterase (256 aa).

An AB hydrolase-1 domain is found at 15 to 242; that stretch reads HLVLLHGWGL…AAHAPFISHP (228 aa). Residues W22, 82–83, and 143–147 contribute to the substrate site; these read SL and FLALQ. Residue S82 is the Nucleophile of the active site. Catalysis depends on residues D207 and H235. H235 is a substrate binding site.

It belongs to the AB hydrolase superfamily. Carboxylesterase BioH family. Monomer.

The protein localises to the cytoplasm. The enzyme catalyses 6-carboxyhexanoyl-[ACP] methyl ester + H2O = 6-carboxyhexanoyl-[ACP] + methanol + H(+). The protein operates within cofactor biosynthesis; biotin biosynthesis. The physiological role of BioH is to remove the methyl group introduced by BioC when the pimeloyl moiety is complete. It allows to synthesize pimeloyl-ACP via the fatty acid synthetic pathway through the hydrolysis of the ester bonds of pimeloyl-ACP esters. The chain is Pimeloyl-[acyl-carrier protein] methyl ester esterase from Shigella boydii serotype 4 (strain Sb227).